The following is a 330-amino-acid chain: Probable ADP,ATP carrier protein At5g56450 (330 aa).

Positions 1 to 10 (MCISKEDEED) are enriched in acidic residues. The segment at 1–22 (MCISKEDEEDPSRNRRNQSPLS) is disordered. 6 consecutive transmembrane segments (helical) span residues 27–61 (LKHFQKDLLAGAVMGGVVHTIVAPIERAKLLLQTQ), 103–127 (GSSVLRYYPSVALNFSLKDLYRSIL), 137–171 (IFSGALANFMAGSAAGCTALIVVYPLDIAHTRLAA), 203–230 (GLPASLHGVIIHRGLYFGGFDTVKEIFS), 236–270 (ELALWKRWGLAQAVTTSAGLASYPLDTVRRRIMMQ), and 300–325 (GALSNMFRSTGSAAILVFYDEVKRFL). Solcar repeat units follow at residues 28-126 (KHFQ…YRSI), 139-228 (SGAL…VKEI), and 241-324 (KRWG…VKRF). ADP contacts are provided by R108 and K120. R264 serves as a coordination point for ADP. The Substrate recognition signature appears at 264–269 (RRRIMM).

It belongs to the mitochondrial carrier (TC 2.A.29) family. As to quaternary structure, monomer.

The protein resides in the membrane. It carries out the reaction ADP(in) + ATP(out) = ADP(out) + ATP(in). Functionally, ADP:ATP antiporter that catalyzes the exchange of ADP and ATP across the membrane. The protein is Probable ADP,ATP carrier protein At5g56450 of Arabidopsis thaliana (Mouse-ear cress).